A 450-amino-acid chain; its full sequence is tRNA modification GTPase MnmE (450 aa).

(6S)-5-formyl-5,6,7,8-tetrahydrofolate-binding residues include Lys21, Glu78, and Lys117. The TrmE-type G domain maps to 213 to 376 (GHALSIIGKP…LSQKISAFFP (164 aa)). Asn223 contributes to the K(+) binding site. Residues 223 to 228 (NAGKSS), 242 to 248 (SDIKGTT), and 267 to 270 (DTAG) contribute to the GTP site. Ser227 is a binding site for Mg(2+). K(+) is bound by residues Ser242, Ile244, and Thr247. Thr248 contacts Mg(2+). Residue Lys450 participates in (6S)-5-formyl-5,6,7,8-tetrahydrofolate binding.

This sequence belongs to the TRAFAC class TrmE-Era-EngA-EngB-Septin-like GTPase superfamily. TrmE GTPase family. Homodimer. Heterotetramer of two MnmE and two MnmG subunits. K(+) serves as cofactor.

It localises to the cytoplasm. In terms of biological role, exhibits a very high intrinsic GTPase hydrolysis rate. Involved in the addition of a carboxymethylaminomethyl (cmnm) group at the wobble position (U34) of certain tRNAs, forming tRNA-cmnm(5)s(2)U34. The polypeptide is tRNA modification GTPase MnmE (Helicobacter acinonychis (strain Sheeba)).